A 184-amino-acid chain; its full sequence is Ras-related protein RabN2 (184 aa).

Residue 3–10 (GDYRSGKT) coordinates GTP. An Effector region motif is present at residues 25 to 32 (TNPSTFDY). GTP is bound by residues 50-54 (DTAGH) and 117-120 (TKSD).

Belongs to the small GTPase superfamily. Rab family.

This is Ras-related protein RabN2 (rabN2) from Dictyostelium discoideum (Social amoeba).